We begin with the raw amino-acid sequence, 992 residues long: Ankyrin repeat domain-containing protein 18A (992 aa).

5 ANK repeats span residues 67–96, 100–129, 133–162, 166–195, and 199–228; these read KDRT…QIDI, LNRT…NPNI, YGNT…NIEA, EGNT…NIHA, and FKRT…RISS. Positions 262–320 are disordered; that stretch reads NHLRNDNQETAAMKPANLKKRKERAKAEHNLKVASEEKQERLQRSENKQPQDSQSYGKK. Coiled-coil stretches lie at residues 278–310, 378–618, 683–713, and 743–899; these read NLKK…ENKQ, KMIT…AERE, ISLL…CLEM, and FKKL…EAFA. Basic and acidic residues predominate over residues 286–310; that stretch reads AKAEHNLKVASEEKQERLQRSENKQ.

The protein is Ankyrin repeat domain-containing protein 18A (ANKRD18A) of Homo sapiens (Human).